The following is a 416-amino-acid chain: Putative competence-damage inducible protein (416 aa).

It belongs to the CinA family.

The protein is Putative competence-damage inducible protein of Bacillus velezensis (strain DSM 23117 / BGSC 10A6 / LMG 26770 / FZB42) (Bacillus amyloliquefaciens subsp. plantarum).